Here is a 205-residue protein sequence, read N- to C-terminus: High frequency lysogenization protein HflD homolog (205 aa).

Belongs to the HflD family.

It localises to the cytoplasm. Its subcellular location is the cell inner membrane. In Shewanella halifaxensis (strain HAW-EB4), this protein is High frequency lysogenization protein HflD homolog.